We begin with the raw amino-acid sequence, 388 residues long: Non-structural maintenance of chromosome element 5 (388 aa).

Component of the smc5/smc6 complex which consists of two subcomplexes, smc5-smc6-nse2 and nse1-nse2-nse4. Interacts with nse6 and rfp1.

The protein resides in the cytoplasm. It localises to the nucleus. It is found in the chromosome. In terms of biological role, acts in a DNA repair pathway for removal of UV-induced DNA damage that is distinct from classical nucleotide excision repair and in repair of ionizing radiation damage. Functions in homologous recombination repair of DNA double strand breaks and in recovery of stalled replication forks. May prevent formation of excessive Holliday junctions or assist in their resolution. In Schizosaccharomyces pombe (strain 972 / ATCC 24843) (Fission yeast), this protein is Non-structural maintenance of chromosome element 5 (nse5).